The sequence spans 731 residues: Actin filament-associated protein 1 (731 aa).

At Met-1 the chain carries N-acetylmethionine. Residues 56-90 form a disordered region; it reads NNLPAPPQMPLPEIPQPWLPPDSGPPPLPTSSLPE. The span at 59–84 shows a compositional bias: pro residues; sequence PAPPQMPLPEIPQPWLPPDSGPPPLP. The SH3-binding motif lies at 70–73; sequence PQPW. The SH2-binding 1 signature appears at 93–96; sequence YEEA. The interval 118-139 is disordered; it reads SSSYESYDEEEEDGKGKKTRHQ. A PH 1 domain is found at 152-248; the sequence is DAKICAFLLR…WLKVIKEAYS (97 aa). The interval 252 to 318 is disordered; sequence GPVDPECSPP…SKSEAKGTVS (67 aa). Residues 271–284 show a composition bias toward basic and acidic residues; the sequence is AELEKKLSSERPSS. Residues Ser-283 and Ser-284 each carry the phosphoserine modification. Residues 348–442 enclose the PH 2 domain; sequence DVPTCGYLNV…WIGILLAETG (95 aa). The SH2-binding 2 signature appears at 452 to 457; that stretch reads YDYIDV. A disordered region spans residues 513 to 544; it reads KNKKPPASSNGVPVKGKAPSSQQKKVETAGGV. Ser-549 carries the phosphoserine modification. The stretch at 558-649 forms a coiled coil; sequence KNRVEADAKR…VKESLKKALA (92 aa). The segment at 595-638 is interaction with F-actin; it reads DLRAAIEVNAGRKTQAALEDKLKRLEEECKQREAERVSLELELT. A disordered region spans residues 658-731; sequence IEPRSGTSSP…AKEWELKNGT (74 aa). Ser-665, Ser-666, and Ser-669 each carry phosphoserine. Thr-676 is subject to Phosphothreonine. Residues 678–687 show a composition bias toward polar residues; the sequence is ENSPISSCDT. Ser-680 and Ser-688 each carry phosphoserine. A compositionally biased stretch (basic and acidic residues) spans 721–731; the sequence is KAKEWELKNGT.

In terms of assembly, monomer and homomultimer. Interacts via its C-terminus with F-actin; probably involving AFAP1 multimers. Interacts with activated SRC SH3-SH2 domains. Interacts via its PH 1 domain with PRKCA, PRKCB and PRKCI. Post-translationally, phosphorylated on tyrosine residues by SRC.

It localises to the cytoplasm. The protein resides in the cytoskeleton. The protein localises to the stress fiber. Can cross-link actin filaments into both network and bundle structures. May modulate changes in actin filament integrity and induce lamellipodia formation. May function as an adapter molecule that links other proteins, such as SRC and PKC to the actin cytoskeleton. In Mus musculus (Mouse), this protein is Actin filament-associated protein 1 (Afap1).